The following is an 852-amino-acid chain: Tiger protein I3 (852 aa).

Positions 1–18 are cleaved as a signal peptide; that stretch reads MKILLFFILFYLFSFSIS. Topologically, residues 19 to 830 are extracellular; that stretch reads YDEVIPLGYE…DVHQYSDARN (812 aa). Residues Asn-31, Asn-47, Asn-67, Asn-97, Asn-129, Asn-201, Asn-215, Asn-228, Asn-260, Asn-323, Asn-352, Asn-356, Asn-404, Asn-441, Asn-476, Asn-483, Asn-501, Asn-512, Asn-574, Asn-592, Asn-635, Asn-658, Asn-661, Asn-679, Asn-680, Asn-723, Asn-757, Asn-761, Asn-773, Asn-785, and Asn-800 are each glycosylated (N-linked (GlcNAc...) asparagine). Residues 290-367 enclose the IPT/TIG domain; the sequence is IPSIVNSIPK…SSPIAVSIND (78 aa). Residues 831–851 form a helical membrane-spanning segment; sequence IFQNLLLSILIIIIISLFISN. Residue Ile-852 is a topological domain, cytoplasmic.

Its subcellular location is the membrane. The chain is Tiger protein I3 (tgrI3) from Dictyostelium discoideum (Social amoeba).